The chain runs to 1098 residues: MLNSSKSILIHAQNKNGTHEEEQYLFAVNNTKAEYPRDKTIHQLFEEQVSKRPNNVAIVCENEQLTYHELNVKANQLARIFIEKGIGKDTLVGIMMEKSIDLFIGILAVLKAGGAYVPIDIEYPKERIQYILDDSQARMLLTQKHLVHLIHNIQFNGQVEIFEEDTIKIREGTNLHVPSKSTDLAYVIYTSGTTGNPKGTMLEHKGISNLKVFFENSLNVTEKDRIGQFASISFDASVWEMFMALLTGASLYIILKDTINDFVKFEQYINQKEITVITLPPTYVVHLDPERILSIQTLITAGSATSPSLVNKWKEKVTYINAYGPTETTICATTWVATKETTGHSVPIGAPIQNTQIYIVDENLQLKSVGEAGELCIGGEGLARGYWKRPELTSQKFVDNPFVPGEKLYKTGDQARWLPDGNIEYLGRIDNQVKIRGHRVELEEVESILLKHMYISETAVSVHKDHQEQPYLCAIFVSEKHIPLEQLRQFSSEELPTYMIPSYFIQLDKMPLTSNGKIDRKQLPEPDLTFGMRVDYEAPRNEIEETLVTIWQDVLGIEKIGIKDNFYALGGDSIKAIQVAARLHSYQLKLETKDLLKYPTIDQLVHYIKDSKRRSEQGIVEGEIGLTPIQHWFFEQQFTNMHHWNQSYMLYRPNGFDKEILLRVFNKIVEHHDALRMIYKHHNGKIVQINRGLEGTLFDFYTFDLTANDNEQQVICEESARLQNSINLEVGPLVKIALFHTQNGDHLFMAIHHLVVDGISWRILFEDLATAYEQAMHQQTIALPEKTDSFKDWSIELEKYANSELFLEEAEYWHHLNYYTDNVQIKKDYVTMNNKQKNIRYVGMELTIEETEKLLKNVNKAYRTEINDILLTALGFALKEWADIDKIVINLEGHGREEILEQMNIARTVGWFTSQYPVVLDMQKSDDLSYQIKLMKENLRRIPNKGIGYEIFKYLTTEYLRPVLPFTLKPEINFNYLGQFDTDVKTELFTRSPYSMGNSLGPDGKNNLSPEGESYFVLNINGFIEEGKLHITFSYNEQQYKEDTIQQLSRSYKQHLLAIIEHCVQKEDTELTPSDFSFKELELEEMDDIFDLLADSLT.

The region spanning 538-612 (APRNEIEETL…QLVHYIKDSK (75 aa)) is the Carrier domain. An O-(pantetheine 4'-phosphoryl)serine modification is found at Ser-573.

Belongs to the ATP-dependent AMP-binding enzyme family. In terms of assembly, large multienzyme complex of GrsA and GrsB. It depends on pantetheine 4'-phosphate as a cofactor.

The enzyme catalyses L-phenylalanine + ATP + H2O = D-phenylalanine + AMP + diphosphate + H(+). It participates in antibiotic biosynthesis; gramicidin S biosynthesis. Functionally, in the first step of peptide synthesis this enzyme activates phenylalanine and racemizes it to the D-isomer. In Brevibacillus brevis (Bacillus brevis), this protein is Gramicidin S synthase 1 (grsA).